A 640-amino-acid polypeptide reads, in one-letter code: Threonine--tRNA ligase (640 aa).

The TGS domain occupies 1–61 (MPTITLPDGS…ACDADVTIIT (61 aa)). The interval 243–534 (DHRKIGKALD…LIEQYAGNMP (292 aa)) is catalytic. Residues Cys334, His385, and His511 each coordinate Zn(2+).

This sequence belongs to the class-II aminoacyl-tRNA synthetase family. As to quaternary structure, homodimer. It depends on Zn(2+) as a cofactor.

The protein localises to the cytoplasm. It carries out the reaction tRNA(Thr) + L-threonine + ATP = L-threonyl-tRNA(Thr) + AMP + diphosphate + H(+). Functionally, catalyzes the attachment of threonine to tRNA(Thr) in a two-step reaction: L-threonine is first activated by ATP to form Thr-AMP and then transferred to the acceptor end of tRNA(Thr). Also edits incorrectly charged L-seryl-tRNA(Thr). The protein is Threonine--tRNA ligase of Dichelobacter nodosus (strain VCS1703A).